The sequence spans 309 residues: Homoserine kinase (309 aa).

91 to 101 (PIGSGLGSSAC) contributes to the ATP binding site.

The protein belongs to the GHMP kinase family. Homoserine kinase subfamily.

It localises to the cytoplasm. The enzyme catalyses L-homoserine + ATP = O-phospho-L-homoserine + ADP + H(+). It functions in the pathway amino-acid biosynthesis; L-threonine biosynthesis; L-threonine from L-aspartate: step 4/5. Its function is as follows. Catalyzes the ATP-dependent phosphorylation of L-homoserine to L-homoserine phosphate. In Buchnera aphidicola subsp. Schizaphis graminum (strain Sg), this protein is Homoserine kinase.